The chain runs to 182 residues: Isopentenyl-diphosphate Delta-isomerase (182 aa).

2 residues coordinate Mn(2+): histidine 25 and histidine 32. Residues leucine 30–methionine 164 enclose the Nudix hydrolase domain. Residue cysteine 67 is part of the active site. Histidine 69 contacts Mn(2+). Residue glutamate 87 coordinates Mg(2+). Glutamate 114 and glutamate 116 together coordinate Mn(2+). Residue glutamate 116 is part of the active site.

This sequence belongs to the IPP isomerase type 1 family. As to quaternary structure, homodimer. Mg(2+) is required as a cofactor. Mn(2+) serves as cofactor.

The protein resides in the cytoplasm. The catalysed reaction is isopentenyl diphosphate = dimethylallyl diphosphate. It functions in the pathway isoprenoid biosynthesis; dimethylallyl diphosphate biosynthesis; dimethylallyl diphosphate from isopentenyl diphosphate: step 1/1. Functionally, catalyzes the 1,3-allylic rearrangement of the homoallylic substrate isopentenyl (IPP) to its highly electrophilic allylic isomer, dimethylallyl diphosphate (DMAPP). The polypeptide is Isopentenyl-diphosphate Delta-isomerase (Escherichia coli O17:K52:H18 (strain UMN026 / ExPEC)).